We begin with the raw amino-acid sequence, 346 residues long: Mitogen-activated protein kinase kinase 1c (346 aa).

The 263-residue stretch at 70–332 folds into the Protein kinase domain; sequence LELVRFLGKG…TTDLLKHPFL (263 aa). ATP is bound by residues 76 to 84 and Lys-99; that span reads LGKGAGGTV. Asp-194 acts as the Proton acceptor in catalysis.

The protein belongs to the protein kinase superfamily. STE Ser/Thr protein kinase family. MAP kinase kinase subfamily.

The catalysed reaction is L-seryl-[protein] + ATP = O-phospho-L-seryl-[protein] + ADP + H(+). The enzyme catalyses L-threonyl-[protein] + ATP = O-phospho-L-threonyl-[protein] + ADP + H(+). It catalyses the reaction L-tyrosyl-[protein] + ATP = O-phospho-L-tyrosyl-[protein] + ADP + H(+). The CERK1, MEKK1a/b, MKK1a/b/c and MPK4a/b proteins are involved in pathogen defense. The pathway induces rapid growth inhibition, cell wall depositions and accumulation of defense-related transcripts. This protein is required for full defense response to fungal pathogen chitin. In Physcomitrium patens (Spreading-leaved earth moss), this protein is Mitogen-activated protein kinase kinase 1c.